The chain runs to 552 residues: MRIATSTLLVGAASAAFAPQDGTQRVLNGFDSIKSAAHSIQKPLQTFEEAMASMTSEAKANWDHLKLLVPDAEEQAKTFFPKKPKPASRKPDSAWDHIVKGADIQAMWVEGATPEETHRKIDGKLDNYNLRARSVDPSKLGVDTVKQYSGYLDDEANDKHLFYWFFESRNDPKNDPVVLWLNGGPGCSSLTGLLFELGPGAINAKIEIVHNPYAWNNNASVIFLDQPVNVGYSYSGGSVSNTVAAGKDIYALLTLFFHQFPEYAKQDFHIAGESYAGHYIPVFASEILSHKKRNINLKSVLIGNGLTDGLTQYEYYRPMACGEGGWKAVLSESECQAMDNALPRCQSMIQNCYDSGSVWSCVPASIYCNNAMIGPYQRTGRNVYDIRGPCKDSGNLCYPELGYISEYLNRREVMEALGAEVSSYDSCNFDINRNFLFQGDWMQPYHRLVPELLNQIPVLIYAGDADFICNWLGNQGWTEALEWKGKKDYNRADYSPLTLASAHDVKPYGKVKSSGNFTFMKIFEAGHMVPYDQAEPSVDFVNRWLAGEWFAA.

Positions 1–18 (MRIATSTLLVGAASAAFA) are cleaved as a signal peptide. The propeptide occupies 19–133 (PQDGTQRVLN…KLDNYNLRAR (115 aa)). Cystine bridges form between C187/C427, C321/C335, C345/C368, C352/C361, and C390/C397. N218 carries N-linked (GlcNAc...) asparagine glycosylation. Residue S274 is part of the active site. D466 is a catalytic residue. Residue N516 is glycosylated (N-linked (GlcNAc...) asparagine). H527 is an active-site residue.

This sequence belongs to the peptidase S10 family.

Its subcellular location is the vacuole. It catalyses the reaction Release of a C-terminal amino acid with broad specificity.. Its function is as follows. Vacuolar carboxypeptidase involved in degradation of small peptides. Digests preferentially peptides containing an aliphatic or hydrophobic residue in P1' position, as well as methionine, leucine or phenylalanine in P1 position of ester substrate. This Pyricularia oryzae (strain 70-15 / ATCC MYA-4617 / FGSC 8958) (Rice blast fungus) protein is Carboxypeptidase Y homolog A (CPYA).